Here is a 284-residue protein sequence, read N- to C-terminus: Signal peptidase I (284 aa).

The chain crosses the membrane as a helical span at residues 4-22 (NFPLLLVIAVAVCGALALV). Residues 23–58 (DLVLFAPRRRAAISSYEGQVNEPDPAVLEKLNKEPL) are Cytoplasmic-facing. The helical transmembrane segment at 59–77 (LVEYGKSFFPVLFIVLVLR) threads the bilayer. Topologically, residues 78-284 (SFLVEPFQIP…PNFSRVGVIH (207 aa)) are periplasmic. Active-site residues include Ser-90 and Lys-145.

This sequence belongs to the peptidase S26 family.

It localises to the cell inner membrane. The enzyme catalyses Cleavage of hydrophobic, N-terminal signal or leader sequences from secreted and periplasmic proteins.. The protein is Signal peptidase I (lepB) of Pseudomonas aeruginosa (strain ATCC 15692 / DSM 22644 / CIP 104116 / JCM 14847 / LMG 12228 / 1C / PRS 101 / PAO1).